Here is a 66-residue protein sequence, read N- to C-terminus: ATP synthase F(0) complex subunit 8 (66 aa).

Residues 8–24 (TWLTMILSMFLVLFIIF) traverse the membrane as a helical segment. Position 54 is an N6-acetyllysine; alternate (lysine 54). At lysine 54 the chain carries N6-succinyllysine; alternate. The residue at position 57 (lysine 57) is an N6-acetyllysine.

It belongs to the ATPase protein 8 family. In terms of assembly, component of the ATP synthase complex composed at least of ATP5F1A/subunit alpha, ATP5F1B/subunit beta, ATP5MC1/subunit c (homooctomer), MT-ATP6/subunit a, MT-ATP8/subunit 8, ATP5ME/subunit e, ATP5MF/subunit f, ATP5MG/subunit g, ATP5MK/subunit k, ATP5MJ/subunit j, ATP5F1C/subunit gamma, ATP5F1D/subunit delta, ATP5F1E/subunit epsilon, ATP5PF/subunit F6, ATP5PB/subunit b, ATP5PD/subunit d, ATP5PO/subunit OSCP. ATP synthase complex consists of a soluble F(1) head domain (subunits alpha(3) and beta(3)) - the catalytic core - and a membrane F(0) domain - the membrane proton channel (subunits c, a, 8, e, f, g, k and j). These two domains are linked by a central stalk (subunits gamma, delta, and epsilon) rotating inside the F1 region and a stationary peripheral stalk (subunits F6, b, d, and OSCP). Interacts with PRICKLE3.

It localises to the mitochondrion membrane. Functionally, subunit 8, of the mitochondrial membrane ATP synthase complex (F(1)F(0) ATP synthase or Complex V) that produces ATP from ADP in the presence of a proton gradient across the membrane which is generated by electron transport complexes of the respiratory chain. ATP synthase complex consist of a soluble F(1) head domain - the catalytic core - and a membrane F(1) domain - the membrane proton channel. These two domains are linked by a central stalk rotating inside the F(1) region and a stationary peripheral stalk. During catalysis, ATP synthesis in the catalytic domain of F(1) is coupled via a rotary mechanism of the central stalk subunits to proton translocation. In vivo, can only synthesize ATP although its ATP hydrolase activity can be activated artificially in vitro. Part of the complex F(0) domain. This Ovis aries (Sheep) protein is ATP synthase F(0) complex subunit 8.